Reading from the N-terminus, the 229-residue chain is Small ribosomal subunit protein mS23 (229 aa).

It belongs to the mitochondrion-specific ribosomal protein mS23 family. In terms of assembly, component of the mitochondrial small ribosomal subunit.

The protein resides in the mitochondrion. This Yarrowia lipolytica (strain CLIB 122 / E 150) (Yeast) protein is Small ribosomal subunit protein mS23 (RSM25).